The sequence spans 289 residues: Thymidylate synthase (289 aa).

Residues Arg26 and 151–152 (RR) contribute to the dUMP site. Cys171 functions as the Nucleophile in the catalytic mechanism. DUMP-binding positions include 191 to 194 (RSGD), Asn202, and 232 to 234 (HVY). A (6R)-5,10-methylene-5,6,7,8-tetrahydrofolate-binding site is contributed by Asp194. Ala288 contributes to the (6R)-5,10-methylene-5,6,7,8-tetrahydrofolate binding site.

The protein belongs to the thymidylate synthase family. In terms of assembly, homodimer.

The enzyme catalyses dUMP + (6R)-5,10-methylene-5,6,7,8-tetrahydrofolate = 7,8-dihydrofolate + dTMP. The protein operates within pyrimidine metabolism; dTTP biosynthesis. The chain is Thymidylate synthase from Equus caballus (Horse).